The chain runs to 343 residues: MEEIKLTEYSHGAGCGCKISPMLLDEILKTDISSTLYPQLLVGNEHKDDAAAYDLGNGTSVLSTTDFFMPIVDDAFTFGRIAATNALSDIYAMGGKPLMAISIFGWPIEKLSSEVARQVIDGGRAACEDAGIPLAGGHSIDSPEPIFGLAVTGIVDNKNLMKNSSATDDCYIFITKSIGIGILTTAQKQKKIEDGDIDVAIEAMATLNRAGAIFATLDSVLTMTDVTGFGLLGHLSEVCEASGISANIWFEKVPLLQNVEKYRAQGCIPGGSRKNFMSYGHKISQISDRQREILCDAQTSGGLLVFVKKSGLDEFYKSAKEFGLNLEPIGETTPRRKHVIEVL.

C15 is a catalytic residue. Residues K18 and 46–48 (HKD) each bind ATP. D49 is a binding site for Mg(2+). ATP contacts are provided by residues D66, D89, and 137 to 139 (GHS). Position 89 (D89) interacts with Mg(2+). Position 225 (D225) interacts with Mg(2+).

Belongs to the selenophosphate synthase 1 family. Class I subfamily. As to quaternary structure, homodimer. Mg(2+) serves as cofactor.

It catalyses the reaction hydrogenselenide + ATP + H2O = selenophosphate + AMP + phosphate + 2 H(+). Its function is as follows. Synthesizes selenophosphate from selenide and ATP. The sequence is that of Selenide, water dikinase from Sulfurimonas denitrificans (strain ATCC 33889 / DSM 1251) (Thiomicrospira denitrificans (strain ATCC 33889 / DSM 1251)).